The primary structure comprises 468 residues: 3-isopropylmalate dehydratase large subunit (468 aa).

[4Fe-4S] cluster-binding residues include Cys-349, Cys-409, and Cys-412.

This sequence belongs to the aconitase/IPM isomerase family. LeuC type 1 subfamily. In terms of assembly, heterodimer of LeuC and LeuD. It depends on [4Fe-4S] cluster as a cofactor.

The enzyme catalyses (2R,3S)-3-isopropylmalate = (2S)-2-isopropylmalate. Its pathway is amino-acid biosynthesis; L-leucine biosynthesis; L-leucine from 3-methyl-2-oxobutanoate: step 2/4. Functionally, catalyzes the isomerization between 2-isopropylmalate and 3-isopropylmalate, via the formation of 2-isopropylmaleate. The polypeptide is 3-isopropylmalate dehydratase large subunit (Roseobacter denitrificans (strain ATCC 33942 / OCh 114) (Erythrobacter sp. (strain OCh 114))).